The following is a 240-amino-acid chain: Sugar fermentation stimulation protein homolog (240 aa).

The protein belongs to the SfsA family.

This Saccharolobus islandicus (strain M.14.25 / Kamchatka #1) (Sulfolobus islandicus) protein is Sugar fermentation stimulation protein homolog.